Consider the following 216-residue polypeptide: Cytidylate kinase (216 aa).

An ATP-binding site is contributed by 7 to 15; that stretch reads GPSGTGKST.

This sequence belongs to the cytidylate kinase family. Type 1 subfamily.

It localises to the cytoplasm. It carries out the reaction CMP + ATP = CDP + ADP. The enzyme catalyses dCMP + ATP = dCDP + ADP. This Chlamydia trachomatis serovar L2 (strain ATCC VR-902B / DSM 19102 / 434/Bu) protein is Cytidylate kinase.